Consider the following 374-residue polypeptide: Phosphate-binding protein PstS1 (374 aa).

The N-terminal stretch at 1 to 23 is a signal peptide; that stretch reads MKIRLHTLLAVLTAAPLLLAAAG. Cys-24 is lipidated: N-palmitoyl cysteine. Cys-24 is lipidated: S-diacylglycerol cysteine. Positions 25 to 48 are disordered; that stretch reads GSKPPSGSPETGAGAGTVATTPAS. Residues 58 to 60, Ser-88, Asp-106, and 189 to 191 contribute to the phosphate site; these read STL and SGD.

Belongs to the PstS family. As to quaternary structure, the complex is composed of two ATP-binding proteins (PstB), two transmembrane proteins (PstC and PstA) and a solute-binding protein (PstS).

The protein localises to the cell membrane. The protein resides in the secreted. In terms of biological role, functions in inorganic phosphate uptake, a phosphate-binding protein, although probably not the main uptake protein under phosphate starvation. Part of the ABC transporter complex PstSACB involved in phosphate import. Functionally, a host TLR2 agonist (toll-like receptor), requires both host TLR1 and TLR2 as coreceptors. The chain is Phosphate-binding protein PstS1 (pstS1) from Mycobacterium bovis (strain BCG / Pasteur 1173P2).